Here is a 102-residue protein sequence, read N- to C-terminus: Small ribosomal subunit protein uS10 (102 aa).

It belongs to the universal ribosomal protein uS10 family. As to quaternary structure, part of the 30S ribosomal subunit.

Its function is as follows. Involved in the binding of tRNA to the ribosomes. In Lactiplantibacillus plantarum (strain ATCC BAA-793 / NCIMB 8826 / WCFS1) (Lactobacillus plantarum), this protein is Small ribosomal subunit protein uS10.